A 206-amino-acid polypeptide reads, in one-letter code: Thiamine-phosphate synthase (206 aa).

4-amino-2-methyl-5-(diphosphooxymethyl)pyrimidine is bound by residues 36 to 40 and N68; that span reads QLRAK. Residues D69 and D88 each coordinate Mg(2+). S105 contacts 4-amino-2-methyl-5-(diphosphooxymethyl)pyrimidine. 131–133 contributes to the 2-[(2R,5Z)-2-carboxy-4-methylthiazol-5(2H)-ylidene]ethyl phosphate binding site; it reads TPT. Residue K134 participates in 4-amino-2-methyl-5-(diphosphooxymethyl)pyrimidine binding. G162 serves as a coordination point for 2-[(2R,5Z)-2-carboxy-4-methylthiazol-5(2H)-ylidene]ethyl phosphate.

Belongs to the thiamine-phosphate synthase family. Mg(2+) is required as a cofactor.

The catalysed reaction is 2-[(2R,5Z)-2-carboxy-4-methylthiazol-5(2H)-ylidene]ethyl phosphate + 4-amino-2-methyl-5-(diphosphooxymethyl)pyrimidine + 2 H(+) = thiamine phosphate + CO2 + diphosphate. It catalyses the reaction 2-(2-carboxy-4-methylthiazol-5-yl)ethyl phosphate + 4-amino-2-methyl-5-(diphosphooxymethyl)pyrimidine + 2 H(+) = thiamine phosphate + CO2 + diphosphate. It carries out the reaction 4-methyl-5-(2-phosphooxyethyl)-thiazole + 4-amino-2-methyl-5-(diphosphooxymethyl)pyrimidine + H(+) = thiamine phosphate + diphosphate. The protein operates within cofactor biosynthesis; thiamine diphosphate biosynthesis; thiamine phosphate from 4-amino-2-methyl-5-diphosphomethylpyrimidine and 4-methyl-5-(2-phosphoethyl)-thiazole: step 1/1. Condenses 4-methyl-5-(beta-hydroxyethyl)thiazole monophosphate (THZ-P) and 2-methyl-4-amino-5-hydroxymethyl pyrimidine pyrophosphate (HMP-PP) to form thiamine monophosphate (TMP). This chain is Thiamine-phosphate synthase, found in Thermus thermophilus (strain ATCC BAA-163 / DSM 7039 / HB27).